A 74-amino-acid chain; its full sequence is uncharacterized protein (74 aa).

It to U.parvum UU416.

This is an uncharacterized protein from Mycoplasma pneumoniae (strain ATCC 29342 / M129 / Subtype 1) (Mycoplasmoides pneumoniae).